An 831-amino-acid polypeptide reads, in one-letter code: Heat shock 70 kDa protein 15 (831 aa).

2 disordered regions span residues 502-579 and 784-831; these read EEEV…KKKV and IMTK…EGST. Positions 512-526 are enriched in basic and acidic residues; sequence DQSEETAKMDTDKAS. Ser533 and Ser536 each carry phosphoserine. Over residues 787–800 the composition is skewed to low complexity; that stretch reads KPKPAAKAEAPQAK.

Belongs to the heat shock protein 70 (TC 1.A.33) family. HSP110/SSE subfamily.

It is found in the cytoplasm. The protein resides in the nucleus. In terms of biological role, in cooperation with other chaperones, Hsp70s are key components that facilitate folding of de novo synthesized proteins, assist translocation of precursor proteins into organelles, and are responsible for degradation of damaged protein under stress conditions. This Arabidopsis thaliana (Mouse-ear cress) protein is Heat shock 70 kDa protein 15 (HSP70-15).